A 335-amino-acid chain; its full sequence is Phosphate acyltransferase (335 aa).

This sequence belongs to the PlsX family. In terms of assembly, homodimer. Probably interacts with PlsY.

Its subcellular location is the cytoplasm. The catalysed reaction is a fatty acyl-[ACP] + phosphate = an acyl phosphate + holo-[ACP]. Its pathway is lipid metabolism; phospholipid metabolism. In terms of biological role, catalyzes the reversible formation of acyl-phosphate (acyl-PO(4)) from acyl-[acyl-carrier-protein] (acyl-ACP). This enzyme utilizes acyl-ACP as fatty acyl donor, but not acyl-CoA. The sequence is that of Phosphate acyltransferase from Clostridium botulinum (strain Loch Maree / Type A3).